A 258-amino-acid chain; its full sequence is UPF0246 protein YE0603 (258 aa).

It belongs to the UPF0246 family.

The chain is UPF0246 protein YE0603 from Yersinia enterocolitica serotype O:8 / biotype 1B (strain NCTC 13174 / 8081).